Here is a 60-residue protein sequence, read N- to C-terminus: Short neurotoxin 1 (60 aa).

4 disulfide bridges follow: Cys3–Cys22, Cys17–Cys39, Cys41–Cys52, and Cys53–Cys58.

The protein belongs to the three-finger toxin family. Short-chain subfamily. Type I alpha-neurotoxin sub-subfamily. In terms of tissue distribution, expressed by the venom gland.

It is found in the secreted. Its function is as follows. Binds to muscle nicotinic acetylcholine receptor (nAChR) and inhibit acetylcholine from binding to the receptor, thereby impairing neuromuscular transmission. The chain is Short neurotoxin 1 from Hydrophis cyanocinctus (Asian annulated sea snake).